Consider the following 351-residue polypeptide: D-alanine--D-alanine ligase (351 aa).

The region spanning 135 to 343 (NQIFLQSGQK…MEEVFSDLIE (209 aa)) is the ATP-grasp domain. 167 to 222 (LETLGFPQFLKPVEGGSSVSVYKITNREQLKEKLALIFESDSKVMSQSFLTGIEVS) serves as a coordination point for ATP. Positions 298, 310, and 312 each coordinate Mg(2+).

This sequence belongs to the D-alanine--D-alanine ligase family. It depends on Mg(2+) as a cofactor. Requires Mn(2+) as cofactor.

The protein resides in the cytoplasm. The enzyme catalyses 2 D-alanine + ATP = D-alanyl-D-alanine + ADP + phosphate + H(+). The protein operates within cell wall biogenesis; peptidoglycan biosynthesis. In terms of biological role, cell wall formation. The protein is D-alanine--D-alanine ligase of Leptospira interrogans serogroup Icterohaemorrhagiae serovar copenhageni (strain Fiocruz L1-130).